Reading from the N-terminus, the 409-residue chain is MLGGKKVVLAYSGGLDTSVCLKWFEEQGAEPYALYLDLGQGEPAEDVREKALRIGAREVFVWDAREEFARDYVAPAIKANALYGGRYPLFTALGRPLIAKKLVEAARRVGATHIAHGSTGKGNDQVRFDVTTGSLAPDLTVVAPVRDWNMNRPEEIEYARKHGIPVPVTKESPYSVDQNLWGRSIEAGPLEDPEHEPTPDVFELTAEPEEAPDEPRYVEIGFERGLPTSLDGEKLPLVELIDRLNAIAGEHGVGRVDMIEDRLVGIKSREIYEAPAALVIIQAHRELESLTLTKDVLRFKPAVEQRFAELTYDGLWFTPLKSALDAFVEETQRTVTGSVRLKLYKGSSTVAGRSAPRALYSKDLATYDPESTFDESAAAGFIALWGLPARRWATVNPDPSQAPQPASRR.

An ATP-binding site is contributed by 10 to 18; the sequence is AYSGGLDTS. Tyr87 is an L-citrulline binding site. Gly117 lines the ATP pocket. L-aspartate-binding residues include Thr119, Asn123, and Asp124. Residue Asn123 participates in L-citrulline binding. L-citrulline-binding residues include Arg127, Ser175, Ser184, Glu260, and Tyr272.

It belongs to the argininosuccinate synthase family. Type 1 subfamily. As to quaternary structure, homotetramer.

It is found in the cytoplasm. It carries out the reaction L-citrulline + L-aspartate + ATP = 2-(N(omega)-L-arginino)succinate + AMP + diphosphate + H(+). Its pathway is amino-acid biosynthesis; L-arginine biosynthesis; L-arginine from L-ornithine and carbamoyl phosphate: step 2/3. This Rubrobacter xylanophilus (strain DSM 9941 / JCM 11954 / NBRC 16129 / PRD-1) protein is Argininosuccinate synthase.